The chain runs to 146 residues: SMR1 protein (146 aa).

The signal sequence occupies residues 1 to 22 (MKSLYLIFGLWILLACFQSGEG). 2 disordered regions span residues 23 to 43 (VRGP…TLPH) and 99 to 146 (TAPD…GGGK). Residues 109–139 (PPTQLHSTEQANTKTDAKISNTTATTQNSTD) show a composition bias toward polar residues. 2 N-linked (GlcNAc...) asparagine glycosylation sites follow: N129 and N136.

In terms of processing, several O-linked glycosylation sites might be present in the C-terminal part. As to expression, expressed predominantly in the acinar cells of the submandibular gland and to lesser extent in the prostate.

It is found in the secreted. Functionally, sialorphin may be involved in the modulation of mineral balance between at least four systems: kidney, bone, tooth and circulation. Submandibular gland peptide T is able to directly or indirectly down-regulate cardiovascular depression induced by septic shock (endotoxin stimuli), or anaphylactic challenge (nematode antigen sensitization). Its function is as follows. Sialorphin is an endogenous inhibitor of neprilysin. Inhibits the breakdown of Met-enkephalin and substance P in isolated tissue from the dorsal zone of the rat spinal cord. Has an analgesic effect when administered to rats by intravenous injection. The polypeptide is SMR1 protein (Vcsa1) (Rattus norvegicus (Rat)).